A 472-amino-acid polypeptide reads, in one-letter code: Mothers against decapentaplegic homolog 1 (472 aa).

Residues 12 to 136 (PAVKRLLGWK…YKRVDSPVLP (125 aa)) form the MH1 domain. The Zn(2+) site is built by cysteine 64, cysteine 109, cysteine 121, and histidine 126. Residues 158–238 (NPLHQTEPPM…PPPAYMPPEE (81 aa)) are disordered. Residues 169 to 182 (QNATFPDSFPQQPA) show a composition bias toward polar residues. The segment covering 188–226 (TPNSPTNSYPSSPNSGTGSTATFPHSPSSSDPGSPFQMP) has biased composition (low complexity). Over residues 227 to 238 (ETPPPAYMPPEE) the composition is skewed to pro residues. An MH2 domain is found at 278–472 (WCSIVYYELN…SPHNPISSVS (195 aa)).

It belongs to the dwarfin/SMAD family. May form trimers with another Smad1 and the co-Smad Smad4.

The protein resides in the cytoplasm. The protein localises to the nucleus. Its function is as follows. Involved in ventralization. May mediate Bmp2b signaling during embryonic dorsal-ventral pattern formation, and may itself be a transcriptional target for Smad5-mediated Bmp2b signaling. The chain is Mothers against decapentaplegic homolog 1 (smad1) from Danio rerio (Zebrafish).